The sequence spans 414 residues: Methyl-CpG-binding domain protein 2 (414 aa).

A required for interaction with DHX9 and PRMT5 region spans residues 1–152; the sequence is MRAHPGGGRC…GPRATESGKR (152 aa). Residues 1 to 163 are disordered; sequence MRAHPGGGRC…DCPALPPGWK (163 aa). The span at 77 to 95 shows a compositional bias: basic residues; sequence GRGRGRGRGRGRGRGRGRG. A compositionally biased stretch (gly residues) spans 98 to 123; that stretch reads QSGGSGLGGDGGGGAGGCGGGSGGGV. The MBD domain maps to 148–216; that stretch reads ESGKRMDCPA…SSFDFRTGKM (69 aa). The residue at position 184 (Ser184) is a Phosphoserine. Residues 217-244 are disordered; that stretch reads MPSKLQKNKQRLRNDPLNQNKGKPDLNT. A compositionally biased stretch (polar residues) spans 232–244; the sequence is PLNQNKGKPDLNT. Ser410 is subject to Phosphoserine.

As to quaternary structure, heterodimer with MBD3 (via N-terminus). Component of the MeCP1 complex that contains HDAC1 and HDAC2. Component of the nucleosome remodeling and deacetylase (NuRD) repressor complex, composed of core proteins MTA1, MTA2, MTA3, RBBP4, RBBP7, HDAC1, HDAC2, MBD2, MBD3, and peripherally associated proteins CDK2AP1, CDK2AP2, GATAD2A, GATAD2B, CHD3, CHD4 and CHD5. The exact stoichiometry of the NuRD complex is unknown, and some subunits such as MBD2 and MBD3, GATAD2A and GATAD2B, and CHD3, CHD4 and CHD5 define mutually exclusive NuRD complexes. Interacts with CDK2AP1. Interacts with DHX9. Interacts with DNMT1. Interacts with GATAD2A/p66-alpha. Interacts with GATAD2B/p66-beta. Interacts with GPN1. Interacts with MIZF. Interacts with PRMT5. Interacts with SIN3A. Interacts with SPHK2. Highly expressed in brain, heart, kidney, lung, skeletal muscle, spleen and testis. Detected at lower levels in embryonic stem cells.

The protein localises to the nucleus. It is found in the chromosome. Binds CpG islands in promoters where the DNA is methylated at position 5 of cytosine within CpG dinucleotides. Binds hemimethylated DNA as well. Recruits histone deacetylases and DNA methyltransferases to chromatin. Acts as a component of the histone deacetylase NuRD complex which participates in the remodeling of chromatin. Acts as transcriptional repressor and plays a role in gene silencing. Functions as a scaffold protein, targeting GATAD2A and GATAD2B to chromatin to promote repression. May enhance the activation of some unmethylated cAMP-responsive promoters. Selectively represses transcription activity of methylated rRNA promoters. This Mus musculus (Mouse) protein is Methyl-CpG-binding domain protein 2.